Here is a 245-residue protein sequence, read N- to C-terminus: DNA polymerase sliding clamp 1 (245 aa).

The protein belongs to the PCNA family. As to quaternary structure, the subunits circularize to form a toroid; DNA passes through its center. Replication factor C (RFC) is required to load the toroid on the DNA. Forms a dimeric complex with PCNA3 and a trimeric complex with PCNA2 and PCNA3; does not form homotrimers.

Its function is as follows. Sliding clamp subunit that acts as a moving platform for DNA processing. Responsible for tethering the catalytic subunit of DNA polymerase and other proteins to DNA during high-speed replication. The trimeric complex inhibits DNA ligase and both 3'-5' and 5'-3' activity of Hel308 (Hjm) helicase, but stimulates Hjc, the Holliday junction cleavage enzyme. This is DNA polymerase sliding clamp 1 from Sulfurisphaera tokodaii (strain DSM 16993 / JCM 10545 / NBRC 100140 / 7) (Sulfolobus tokodaii).